The primary structure comprises 689 residues: Protein SDA1 homolog (689 aa).

Residues 254–319 (KKNTKNKKKL…RFEVKLMHMD (66 aa)) adopt a coiled-coil conformation. Disordered regions lie at residues 485 to 512 (EQEK…DGEW) and 606 to 689 (KPKS…RLMK). The segment covering 668-681 (SFRDKQIALRDSLL) has biased composition (basic and acidic residues).

The protein belongs to the SDA1 family.

Its subcellular location is the nucleus. The protein resides in the nucleolus. Its function is as follows. Required for 60S pre-ribosomal subunits export to the cytoplasm. This chain is Protein SDA1 homolog (sdad1), found in Xenopus tropicalis (Western clawed frog).